A 259-amino-acid chain; its full sequence is Pimeloyl-[acyl-carrier protein] methyl ester esterase (259 aa).

Residues W18, 78–79 (SL), and 139–143 (FLALD) contribute to the substrate site. The active-site Nucleophile is the S78. Catalysis depends on residues D203 and H231. Residue H231 coordinates substrate.

Belongs to the AB hydrolase superfamily. Carboxylesterase BioH family. Monomer.

Its subcellular location is the cytoplasm. The catalysed reaction is 6-carboxyhexanoyl-[ACP] methyl ester + H2O = 6-carboxyhexanoyl-[ACP] + methanol + H(+). Its pathway is cofactor biosynthesis; biotin biosynthesis. In terms of biological role, the physiological role of BioH is to remove the methyl group introduced by BioC when the pimeloyl moiety is complete. It allows to synthesize pimeloyl-ACP via the fatty acid synthetic pathway through the hydrolysis of the ester bonds of pimeloyl-ACP esters. This chain is Pimeloyl-[acyl-carrier protein] methyl ester esterase, found in Stenotrophomonas maltophilia (strain K279a).